Reading from the N-terminus, the 607-residue chain is Cyclic-di-GMP receptor FimW (607 aa).

The interval 323–492 (ERTFQRTQGQ…GGTQMGIEMI (170 aa)) is pilZ-like domain. Residues 324–328 (RTFQR) carry the RXXXR motif motif. Positions 435–440 (NHSPGG) match the D/NXSXXG motif motif. Residues 568–582 (SQFEYRSAEPVNTPS) show a composition bias toward polar residues. The tract at residues 568 to 607 (SQFEYRSAEPVNTPSDKPVTAPVARPPAGEEDFDSLWKSL) is disordered.

As to quaternary structure, monomer in the absence of c-di-GMP. Forms dimers in the presence of c-di-GMP.

It localises to the cytoplasm. Its function is as follows. High-affinity cyclic-di-GMP binding protein that regulates type IV pili (T4P) elongation. Required for T4P-mediated surface attachment and walking motility during the early phases of surface colonization. Not required for twitching motility. Does not bind related nucleotides such as GMP, GDP, GTP or ATP. The sequence is that of Cyclic-di-GMP receptor FimW from Pseudomonas aeruginosa (strain ATCC 15692 / DSM 22644 / CIP 104116 / JCM 14847 / LMG 12228 / 1C / PRS 101 / PAO1).